The primary structure comprises 78 residues: NAD(P)H-quinone oxidoreductase subunit O (78 aa).

This sequence belongs to the complex I NdhO subunit family. In terms of assembly, NDH-1 can be composed of about 15 different subunits; different subcomplexes with different compositions have been identified which probably have different functions.

It localises to the cellular thylakoid membrane. The enzyme catalyses a plastoquinone + NADH + (n+1) H(+)(in) = a plastoquinol + NAD(+) + n H(+)(out). It catalyses the reaction a plastoquinone + NADPH + (n+1) H(+)(in) = a plastoquinol + NADP(+) + n H(+)(out). In terms of biological role, NDH-1 shuttles electrons from an unknown electron donor, via FMN and iron-sulfur (Fe-S) centers, to quinones in the respiratory and/or the photosynthetic chain. The immediate electron acceptor for the enzyme in this species is believed to be plastoquinone. Couples the redox reaction to proton translocation, and thus conserves the redox energy in a proton gradient. Cyanobacterial NDH-1 also plays a role in inorganic carbon-concentration. This chain is NAD(P)H-quinone oxidoreductase subunit O, found in Prochlorococcus marinus (strain AS9601).